The sequence spans 342 residues: Fatty acid desaturase 6 (342 aa).

A run of 2 helical transmembrane segments spans residues 39 to 59 (GVDC…FLCL) and 63 to 83 (NILA…TLTV). A Histidine box-1 motif is present at residues 87–91 (HLATH). The chain crosses the membrane as a helical span at residues 100-120 (WSKILMIFFLEVCTAFSAEFA). The Histidine box-2 motif lies at 124-128 (HVNLH). A run of 2 helical transmembrane segments spans residues 151 to 171 (YVYM…VALE) and 185 to 205 (LGFI…VSGF). The short motif at 277–281 (HVEHH) is the Histidine box-3 element.

The protein belongs to the fatty acid desaturase type 1 family.

It is found in the membrane. The protein operates within lipid metabolism; fatty acid metabolism. The protein is Fatty acid desaturase 6 (Fads6) of Mus musculus (Mouse).